Here is a 47-residue protein sequence, read N- to C-terminus: MKKFRWVALVVVVLACLLLWAQVFNMMCDQDVQFFSGICALNQFIPW.

A helical transmembrane segment spans residues 6–26; the sequence is WVALVVVVLACLLLWAQVFNM.

Belongs to the MgrB family. As to quaternary structure, may form homooligomers. Probably interacts with the periplasmic domain of PhoQ.

It localises to the cell inner membrane. Functionally, phoP-regulated transcription is redox-sensitive, being activated when the periplasm becomes more reducing. MgrB acts between DsbA/DsbB and PhoP/PhoQ in this pathway. Represses PhoP/PhoQ signaling, possibly by binding to the periplasmic domain of PhoQ, altering its activity and that of downstream effector PhoP. In Escherichia coli O1:K1 / APEC, this protein is PhoP/PhoQ regulator MgrB.